A 233-amino-acid chain; its full sequence is Probable fimbrial chaperone protein ElfD (233 aa).

The N-terminal stretch at 1-26 (MKTCITKGIVTVSLTAILLSCSSTWA) is a signal peptide.

The protein belongs to the periplasmic pilus chaperone family.

The protein localises to the periplasm. In terms of biological role, part of the elfADCG fimbrial operon, which could be required for adherence to host epithelial cells. Could be required for the biogenesis of the ElfA fimbriae. The protein is Probable fimbrial chaperone protein ElfD (elfD) of Escherichia coli O157:H7.